The sequence spans 200 residues: Small ribosomal subunit protein uS4 (200 aa).

Residues 22-42 (TGKELEKRPYAPGPHGPGQRK) form a disordered region. The 64-residue stretch at 92-155 (ARLDNVVYKL…RNLSIIKESV (64 aa)) folds into the S4 RNA-binding domain.

This sequence belongs to the universal ribosomal protein uS4 family. Part of the 30S ribosomal subunit. Contacts protein S5. The interaction surface between S4 and S5 is involved in control of translational fidelity.

Its function is as follows. One of the primary rRNA binding proteins, it binds directly to 16S rRNA where it nucleates assembly of the body of the 30S subunit. In terms of biological role, with S5 and S12 plays an important role in translational accuracy. The protein is Small ribosomal subunit protein uS4 of Bacillus velezensis (strain DSM 23117 / BGSC 10A6 / LMG 26770 / FZB42) (Bacillus amyloliquefaciens subsp. plantarum).